A 533-amino-acid chain; its full sequence is MDTPRPIKRALLSVSDKAGIVEFAQRLSEKGVDLLSTGGTAKLLAENGIKVTEVSDYTGHPEIMDGRVKTLHPKVHGGILARRGIDEVVMDENGISAIDMVVVNLYPFANAVSDENCSLENAIENIDIGGPTMVRAAAKNHKDVTIVVNASDYERVLTELDNNNDSLTYKTRFDLAIAAYEHTASYDGMIANYFGKMLPAYGETESKASLENKVKFPRTFNSQFIKTQDLRYGENSHQDAAFYKEENPEEASVSTATQLQGKALSYNNIADTDAALECVKEFDEPACVIVKHANPCGVAIGDDILAAYEGAYKTDPTSAFGGIIAFNRELDADTAEAIVSRQFVEVIIAPSVSDAAAQIVAAKPNLRLLECGQWDNKTTGFDFKRVNGGLLVQDTDQGRVTSDDLTVVTKRQPTDEEMRDLQFCWKVAKFVKSNAIVYVKNSSTIGVGAGQMSRVYSAKVAGIKAADENLEVKGSVMASDAFFPFRDGLDAAAEAGITAVIQPGGSMRDDEVIAAADEHNIAMVFTGMRHFRH.

The region spanning 1 to 148 (MDTPRPIKRA…KNHKDVTIVV (148 aa)) is the MGS-like domain.

Belongs to the PurH family.

It catalyses the reaction (6R)-10-formyltetrahydrofolate + 5-amino-1-(5-phospho-beta-D-ribosyl)imidazole-4-carboxamide = 5-formamido-1-(5-phospho-D-ribosyl)imidazole-4-carboxamide + (6S)-5,6,7,8-tetrahydrofolate. The enzyme catalyses IMP + H2O = 5-formamido-1-(5-phospho-D-ribosyl)imidazole-4-carboxamide. It functions in the pathway purine metabolism; IMP biosynthesis via de novo pathway; 5-formamido-1-(5-phospho-D-ribosyl)imidazole-4-carboxamide from 5-amino-1-(5-phospho-D-ribosyl)imidazole-4-carboxamide (10-formyl THF route): step 1/1. The protein operates within purine metabolism; IMP biosynthesis via de novo pathway; IMP from 5-formamido-1-(5-phospho-D-ribosyl)imidazole-4-carboxamide: step 1/1. This is Bifunctional purine biosynthesis protein PurH from Colwellia psychrerythraea (strain 34H / ATCC BAA-681) (Vibrio psychroerythus).